A 93-amino-acid polypeptide reads, in one-letter code: Small ribosomal subunit protein uS19 (93 aa).

It belongs to the universal ribosomal protein uS19 family.

Functionally, protein S19 forms a complex with S13 that binds strongly to the 16S ribosomal RNA. The chain is Small ribosomal subunit protein uS19 from Desulfitobacterium hafniense (strain DSM 10664 / DCB-2).